The sequence spans 356 residues: 4-hydroxy-3-methylbut-2-en-1-yl diphosphate synthase (flavodoxin) (356 aa).

[4Fe-4S] cluster is bound by residues Cys264, Cys267, Cys299, and Glu306.

This sequence belongs to the IspG family. The cofactor is [4Fe-4S] cluster.

It carries out the reaction (2E)-4-hydroxy-3-methylbut-2-enyl diphosphate + oxidized [flavodoxin] + H2O + 2 H(+) = 2-C-methyl-D-erythritol 2,4-cyclic diphosphate + reduced [flavodoxin]. It participates in isoprenoid biosynthesis; isopentenyl diphosphate biosynthesis via DXP pathway; isopentenyl diphosphate from 1-deoxy-D-xylulose 5-phosphate: step 5/6. In terms of biological role, converts 2C-methyl-D-erythritol 2,4-cyclodiphosphate (ME-2,4cPP) into 1-hydroxy-2-methyl-2-(E)-butenyl 4-diphosphate. The polypeptide is 4-hydroxy-3-methylbut-2-en-1-yl diphosphate synthase (flavodoxin) (Natranaerobius thermophilus (strain ATCC BAA-1301 / DSM 18059 / JW/NM-WN-LF)).